Reading from the N-terminus, the 62-residue chain is uncharacterized protein (62 aa).

This is an uncharacterized protein from Potato leafroll virus (strain Potato/Scotland/strain 1/1984) (PLrV).